A 332-amino-acid chain; its full sequence is ADP-L-glycero-D-manno-heptose-6-epimerase (332 aa).

Residues 11 to 12 (FI), 32 to 33 (DN), Lys39, Lys54, 76 to 80 (EGACS), and Asn93 contribute to the NADP(+) site. Tyr140 serves as the catalytic Proton acceptor. Lys144 contributes to the NADP(+) binding site. Substrate is bound at residue Asn170. Residues Val171 and Lys179 each contribute to the NADP(+) site. The active-site Proton acceptor is Lys179. Substrate is bound by residues Arg181, His188, 202 to 205 (FEGS), Arg215, and Tyr294.

It belongs to the NAD(P)-dependent epimerase/dehydratase family. HldD subfamily. Homopentamer. The cofactor is NADP(+).

It catalyses the reaction ADP-D-glycero-beta-D-manno-heptose = ADP-L-glycero-beta-D-manno-heptose. The protein operates within nucleotide-sugar biosynthesis; ADP-L-glycero-beta-D-manno-heptose biosynthesis; ADP-L-glycero-beta-D-manno-heptose from D-glycero-beta-D-manno-heptose 7-phosphate: step 4/4. Its function is as follows. Catalyzes the interconversion between ADP-D-glycero-beta-D-manno-heptose and ADP-L-glycero-beta-D-manno-heptose via an epimerization at carbon 6 of the heptose. The sequence is that of ADP-L-glycero-D-manno-heptose-6-epimerase from Dechloromonas aromatica (strain RCB).